Reading from the N-terminus, the 262-residue chain is Putative BTB/POZ domain-containing protein L834 (262 aa).

The region spanning 16–86 (FDVVVELTDE…FYKKNIQPCI (71 aa)) is the BTB domain.

This sequence belongs to the mimivirus BTB/WD family.

This chain is Putative BTB/POZ domain-containing protein L834, found in Acanthamoeba polyphaga (Amoeba).